The primary structure comprises 325 residues: Brain mitochondrial carrier protein 1 (325 aa).

Helical transmembrane passes span G38 to A54, L112 to L128, L141 to P161, G199 to L215, V240 to V256, and G298 to I315. 3 Solcar repeats span residues K42 to L131, E139 to H224, and D233 to L323.

This sequence belongs to the mitochondrial carrier (TC 2.A.29) family. Homotetramer. As to expression, mainly expressed in brain. Some expression in testis and pituitary.

It is found in the mitochondrion inner membrane. It catalyses the reaction sulfite(in) + sulfate(out) = sulfite(out) + sulfate(in). The enzyme catalyses thiosulfate(in) + sulfate(out) = thiosulfate(out) + sulfate(in). It carries out the reaction sulfate(out) + phosphate(in) = sulfate(in) + phosphate(out). The catalysed reaction is oxalate(in) + sulfate(out) = oxalate(out) + sulfate(in). It catalyses the reaction malonate(in) + sulfate(out) = malonate(out) + sulfate(in). The enzyme catalyses maleate(in) + sulfate(out) = maleate(out) + sulfate(in). It carries out the reaction (S)-malate(in) + sulfate(out) = (S)-malate(out) + sulfate(in). The catalysed reaction is (3S)-citramalate(in) + sulfate(out) = (3S)-citramalate(out) + sulfate(in). It catalyses the reaction (3R)-citramalate(in) + sulfate(out) = (3R)-citramalate(out) + sulfate(in). The enzyme catalyses sulfate(out) + succinate(in) = sulfate(in) + succinate(out). It carries out the reaction (S,S)-tartrate(in) + sulfate(out) = (S,S)-tartrate(out) + sulfate(in). The catalysed reaction is (2R,3R)-tartrate(in) + sulfate(out) = (2R,3R)-tartrate(out) + sulfate(in). It catalyses the reaction D-aspartate(in) + sulfate(out) = D-aspartate(out) + sulfate(in). The enzyme catalyses L-aspartate(in) + sulfate(out) = L-aspartate(out) + sulfate(in). It carries out the reaction sulfate(in) = sulfate(out). The catalysed reaction is phosphate(in) = phosphate(out). It catalyses the reaction (S)-malate(out) = (S)-malate(in). The enzyme catalyses citrate(in) = citrate(out). It carries out the reaction L-aspartate(out) = L-aspartate(in). The catalysed reaction is L-glutamate(out) = L-glutamate(in). It catalyses the reaction H(+)(in) = H(+)(out). The enzyme catalyses chloride(in) = chloride(out). Its activity is regulated as follows. Increased activity at pH lower than 8.0. sulfate/sulfate exchange activity is inhibited strongly by pyridoxal 5'-phosphate, bathophenanthroline and the organic mercurials mersalyl, p-chloromercuribenzoate and HgCl2. Proton conductance is activated by cardiolipin and long-chain free fatty acids and inhibited by purine nucleotides ATP and ADP. Chloride ion transporter activity is inhibited by long-chain free fatty acids. Transports inorganic anions (sulfate, sulfite, thiosulfate and phosphate) and, to a lesser extent, a variety of dicarboxylates (e.g. malonate, malate and citramalate) and, even more so, aspartate and glutamate and tricarboxylates. May catalyze the export of sulfite and thiosulfate (the hydrogen sulfide degradation products) from the mitochondria, thereby modulating the level of the hydrogen sulfide. Also can mediate a very low unidirectional transport of anions including sulfate, phosphate, (S)-malate, citrate, L-aspartate and L-glutamate. Maintains oxidative balance (through uncoupling activities) and ATP production (by modifying mitochondrial membrane potential). Is able to transport protons across lipid membranes. Also exhibits transmembrane chloride transport activity to a lesser extent. May modify mitochondrial respiratory efficiency and mitochondrial oxidant production. The sequence is that of Brain mitochondrial carrier protein 1 from Homo sapiens (Human).